Reading from the N-terminus, the 26-residue chain is Thioredoxin H-type (26 aa).

Belongs to the thioredoxin family. Plant H-type subfamily.

The protein resides in the cytoplasm. Its function is as follows. Participates in various redox reactions through the reversible oxidation of the active center dithiol to a disulfide. The H form is known to activate a number of cytosolic enzymes. This is Thioredoxin H-type from Populus euphratica (Euphrates poplar).